Reading from the N-terminus, the 245-residue chain is 7-cyano-7-deazaguanine synthase 2 (245 aa).

An ATP-binding site is contributed by 12–22 (FSGGQDSTTCL). Cysteine 200, cysteine 215, cysteine 218, and cysteine 221 together coordinate Zn(2+).

Belongs to the QueC family. Requires Zn(2+) as cofactor.

It catalyses the reaction 7-carboxy-7-deazaguanine + NH4(+) + ATP = 7-cyano-7-deazaguanine + ADP + phosphate + H2O + H(+). It participates in purine metabolism; 7-cyano-7-deazaguanine biosynthesis. In terms of biological role, catalyzes the ATP-dependent conversion of 7-carboxy-7-deazaguanine (CDG) to 7-cyano-7-deazaguanine (preQ(0)). The chain is 7-cyano-7-deazaguanine synthase 2 from Mesorhizobium japonicum (strain LMG 29417 / CECT 9101 / MAFF 303099) (Mesorhizobium loti (strain MAFF 303099)).